Consider the following 265-residue polypeptide: Tryptophan synthase alpha chain (265 aa).

Active-site proton acceptor residues include Glu49 and Asp60.

Belongs to the TrpA family. In terms of assembly, tetramer of two alpha and two beta chains.

It carries out the reaction (1S,2R)-1-C-(indol-3-yl)glycerol 3-phosphate + L-serine = D-glyceraldehyde 3-phosphate + L-tryptophan + H2O. It functions in the pathway amino-acid biosynthesis; L-tryptophan biosynthesis; L-tryptophan from chorismate: step 5/5. Functionally, the alpha subunit is responsible for the aldol cleavage of indoleglycerol phosphate to indole and glyceraldehyde 3-phosphate. The protein is Tryptophan synthase alpha chain of Cupriavidus pinatubonensis (strain JMP 134 / LMG 1197) (Cupriavidus necator (strain JMP 134)).